The following is a 238-amino-acid chain: MVMGRIHSIESMGLVDGPGIRTVVFFQGCGLRCSYCHNPDTWNMAGGKELTAEELLKKLLRFKPYFDRSGGGVTFSGGEVLLQPEFLIDILKLCKEQGIHTAIDTAGYGYGNYEEILKHTDLVLLDIKHVDDDGYKCITGKGKRGFDDFLKAVENIGVKVWIRHVIVPTLTDSKENIRKLANIIKNIRNVEKVELLPYHTLGINKYEKLNLDYKLRDIEAMDKEKRKKLEKYLKELLE.

A Radical SAM core domain is found at 15-236 (VDGPGIRTVV…KKLEKYLKEL (222 aa)). [4Fe-4S] cluster contacts are provided by cysteine 29, cysteine 33, and cysteine 36. S-adenosyl-L-methionine-binding positions include 35 to 37 (YCH), glycine 78, 126 to 128 (DIK), and histidine 199.

This sequence belongs to the organic radical-activating enzymes family. The cofactor is [4Fe-4S] cluster.

The protein localises to the cytoplasm. The catalysed reaction is glycyl-[formate C-acetyltransferase] + reduced [flavodoxin] + S-adenosyl-L-methionine = glycin-2-yl radical-[formate C-acetyltransferase] + semiquinone [flavodoxin] + 5'-deoxyadenosine + L-methionine + H(+). Its function is as follows. Activation of pyruvate formate-lyase under anaerobic conditions by generation of an organic free radical, using S-adenosylmethionine and reduced flavodoxin as cosubstrates to produce 5'-deoxy-adenosine. This Clostridium pasteurianum protein is Pyruvate formate-lyase-activating enzyme (act).